Reading from the N-terminus, the 312-residue chain is Glyoxylate/hydroxypyruvate reductase A (312 aa).

Arg-227 is a catalytic residue. His-275 (proton donor) is an active-site residue.

Belongs to the D-isomer specific 2-hydroxyacid dehydrogenase family. GhrA subfamily.

It localises to the cytoplasm. The catalysed reaction is glycolate + NADP(+) = glyoxylate + NADPH + H(+). It catalyses the reaction (R)-glycerate + NAD(+) = 3-hydroxypyruvate + NADH + H(+). It carries out the reaction (R)-glycerate + NADP(+) = 3-hydroxypyruvate + NADPH + H(+). In terms of biological role, catalyzes the NADPH-dependent reduction of glyoxylate and hydroxypyruvate into glycolate and glycerate, respectively. In Escherichia coli O17:K52:H18 (strain UMN026 / ExPEC), this protein is Glyoxylate/hydroxypyruvate reductase A.